Here is a 440-residue protein sequence, read N- to C-terminus: Elongation factor 1-alpha (440 aa).

The 224-residue stretch at 5–228 (KPHINLVVIG…ALDTYIQPPK (224 aa)) folds into the tr-type G domain. Positions 14 to 21 (GHVDHGKS) are G1. A GTP-binding site is contributed by 14-21 (GHVDHGKS). Residue serine 21 participates in Mg(2+) binding. The G2 stretch occupies residues 70–74 (GVTID). Residues 91–94 (DAPG) are G3. Residues 91–95 (DAPGH) and 153–156 (NKMD) contribute to the GTP site. A G4 region spans residues 153 to 156 (NKMD). The segment at 194-196 (SAW) is G5.

This sequence belongs to the TRAFAC class translation factor GTPase superfamily. Classic translation factor GTPase family. EF-Tu/EF-1A subfamily.

It is found in the cytoplasm. The enzyme catalyses GTP + H2O = GDP + phosphate + H(+). In terms of biological role, GTP hydrolase that promotes the GTP-dependent binding of aminoacyl-tRNA to the A-site of ribosomes during protein biosynthesis. The sequence is that of Elongation factor 1-alpha from Hyperthermus butylicus (strain DSM 5456 / JCM 9403 / PLM1-5).